The following is a 443-amino-acid chain: KICSTOR complex protein ITFG2 (443 aa).

An FG-GAP 1; atypical repeat occupies 19-48 (FPHAICLGDVDNDALNELVVGDTSGKLSVY). Ser104 carries the phosphoserine modification. One copy of the FG-GAP 2; atypical repeat lies at 125-154 (NTKVMLISDIDGDGCYELVVGYTDRVVRAF). Ser219 carries the post-translational modification Phosphoserine.

In terms of assembly, part of the KICSTOR complex composed of KPTN, ITFG2, KICS2 and SZT2. SZT2 probably serves as a link between the other three proteins in the KICSTOR complex and may mediate the direct interaction with the GATOR complex via GATOR1. The KICSTOR complex interacts directly with the GATOR1 complex and most probably indirectly with the GATOR2 complex in an amino acid-independent manner.

The protein localises to the lysosome membrane. Functionally, as part of the KICSTOR complex functions in the amino acid-sensing branch of the TORC1 signaling pathway. Recruits, in an amino acid-independent manner, the GATOR1 complex to the lysosomal membranes and allows its interaction with GATOR2 and the RAG GTPases. Functions upstream of the RAG GTPases and is required to negatively regulate mTORC1 signaling in absence of amino acids. In absence of the KICSTOR complex mTORC1 is constitutively localized to the lysosome and activated. The KICSTOR complex is also probably involved in the regulation of mTORC1 by glucose. The chain is KICSTOR complex protein ITFG2 from Mus musculus (Mouse).